The sequence spans 772 residues: Angiomotin-like protein 2 (772 aa).

Disordered stretches follow at residues 41–158, 170–239, and 260–299; these read GGAG…HVRS, RNGA…SPHF, and QYQY…PSAQ. Basic and acidic residues-rich tracts occupy residues 80-91, 100-112, and 142-153; these read QGGETHLAENRL, KGEE…EAKA, and RRQDEALRELRH. The interval 101–303 is required for interaction with CDH5; it reads GEELPTYEEA…GPPSAQATLG (203 aa). The residue at position 107 (Tyr107) is a Phosphotyrosine; by FGFR1. A compositionally biased stretch (polar residues) spans 178-191; sequence HMSSSHSFPQLARS. Residues 197-214 are compositionally biased toward pro residues; that stretch reads PRGPPAEGPEPRGPPPQY. Positions 221–303 are required for interaction with CDH1; it reads QETAAVTDPR…GPPSAQATLG (83 aa). A coiled-coil region spans residues 305–578; sequence AHLAQMETVL…KYLEERAMRQ (274 aa). Residues Lys343 and Lys404 each participate in a glycyl lysine isopeptide (Lys-Gly) (interchain with G-Cter in ubiquitin) cross-link. Disordered regions lie at residues 596–615 and 680–752; these read IRHS…LLPG and GLVS…RTPS. A compositionally biased stretch (basic and acidic residues) spans 686-699; the sequence is RQTDARPAGDRVPA. Over residues 718 to 733 the composition is skewed to polar residues; sequence DGSTQTDGPADNTSAC. Residues Ser752 and Ser755 each carry the phosphoserine modification. A PDZ-binding motif is present at residues 769-772; that stretch reads EILI.

It belongs to the angiomotin family. Part of a complex composed of AMOTL2, MAGI1 and CDH5, within the complex AMOTL2 acts as a scaffold protein for the interaction of MAGI1 with CDH5. The complex is required for coupling actin fibers to cell junctions in endothelial cells. Within the complex AMOTL2 (via its N-terminus) interacts with CDH5. Interacts (via N-terminus) with MAGI1. Interacts (via N-terminus) with ACTB; the interaction facilitates binding of cell junction complexes to actin fibers in endothelial cells. Interacts with CDH1; the interaction may facilitate binding of radial actin fibers to cell junction complexes. Interacts with SRC. Interacts with YAP1; the interaction is required for ubiquitination of AMOTL2 and localization of YAP1 to tight junctions. Interacts with WWP1; the interaction facilitates WWP1 interaction with the Crumbs complex and subsequent WWP1 translocation to the plasma membrane. WWP1 interaction with the Crumbs complex promotes WWP1 monoubiquitination of AMOTL2 which subsequently activates the Hippo signaling pathway. When ubiquitinated interacts with LATS2 (via UBA domain); the interaction promotes LATS2 phosphorylation of YAP1. Interacts (via PPXY motif) with WWTR1/TAZ (via WW domain); the interaction promotes WWTR1/TAZ localization to the cytoplasm and thereby inhibition of its transcriptional properties. Interacts with PHLDB2; interaction may facilitate PHLDB2 localization to the myotube podosome cortex that surrounds the core. Phosphorylation at Tyr-107 is necessary for efficient binding to SRC and synergistically functioning with SRC to activate the downstream MAPK pathway. In terms of processing, monoubiquitinated at Lys-343 and Lys-404 by Crumbs complex-bound WWP1. De-ubiquitinated at Lys-343 and Lys-404 by USP9X; the interaction may be promoted by cell contact inhibition. Deubiquitination of AMOTL2 negatively regulates Hippo signaling activation. Expressed in skeletal muscle at neuromuscular junctions (at protein level).

The protein resides in the recycling endosome. The protein localises to the cytoplasm. It localises to the cell projection. It is found in the podosome. Its subcellular location is the cell junction. Functionally, regulates the translocation of phosphorylated SRC to peripheral cell-matrix adhesion sites. Required for proper architecture of actin filaments. Plays a role in coupling actin fibers to cell junctions in endothelial cells and is therefore required for correct endothelial cell morphology via facilitating transcellular transmission of mechanical force resulting in endothelial cell elongation. Required for the anchoring of radial actin fibers to CDH1 junction complexes at the cell membrane which facilitates organization of radial actin fiber structure and cellular response to contractile forces. This contributes to maintenance of cell area, size, shape, epithelial sheet organization and trophectoderm cell properties that facilitate blastocyst zona hatching. Inhibits the Wnt/beta-catenin signaling pathway, probably by recruiting CTNNB1 to recycling endosomes and hence preventing its translocation to the nucleus. Participates in angiogenesis. Activates the Hippo signaling pathway in response to cell contact inhibition via interaction with and ubiquitination by Crumbs complex-bound WWP1. Ubiquitinated AMOTL2 then interacts with LATS2 which in turn phosphorylates YAP1, excluding it from the nucleus and localizing it to the cytoplasm and tight junctions, therefore ultimately repressing YAP1-driven transcription of target genes. Acts to inhibit WWTR1/TAZ transcriptional coactivator activity via sequestering WWTR1/TAZ in the cytoplasm and at tight junctions. Regulates the size and protein composition of the podosome cortex and core at myofibril neuromuscular junctions. Selectively promotes FGF-induced MAPK activation through SRC. May play a role in the polarity, proliferation and migration of endothelial cells. The sequence is that of Angiomotin-like protein 2 from Mus musculus (Mouse).